The sequence spans 124 residues: Large ribosomal subunit protein bL12 (124 aa).

This sequence belongs to the bacterial ribosomal protein bL12 family. As to quaternary structure, homodimer. Part of the ribosomal stalk of the 50S ribosomal subunit. Forms a multimeric L10(L12)X complex, where L10 forms an elongated spine to which 2 to 4 L12 dimers bind in a sequential fashion. Binds GTP-bound translation factors.

Forms part of the ribosomal stalk which helps the ribosome interact with GTP-bound translation factors. Is thus essential for accurate translation. This Cupriavidus pinatubonensis (strain JMP 134 / LMG 1197) (Cupriavidus necator (strain JMP 134)) protein is Large ribosomal subunit protein bL12.